Reading from the N-terminus, the 980-residue chain is Serine/threonine-protein phosphatase 4 regulatory subunit 3 (980 aa).

Positions 1–105 constitute a WH1 domain; it reads MTTDTRRRVK…EKICQVQGKD (105 aa). Disordered regions lie at residues 640-668, 695-861, and 885-980; these read RDKM…RQME, VSEK…SLCD, and VTAA…ARQA. Residues 695–708 are compositionally biased toward polar residues; that stretch reads VSEKNGPQTQNQQK. 4 stretches are compositionally biased toward low complexity: residues 709-749, 757-789, 803-859, and 885-926; these read SSPP…SSSP, QTQA…QQTQ, EAPQ…AASL, and VTAA…SPAS. The segment covering 929-939 has biased composition (polar residues); the sequence is QDANSTEGTSS. The span at 940 to 951 shows a compositional bias: basic and acidic residues; that stretch reads EADKTTAKKGLV. Positions 953–968 are enriched in acidic residues; it reads YESDSGEDDYEEDEYS.

This sequence belongs to the SMEK family. As to quaternary structure, serine/threonine-protein phosphatase 4 (PP4) occurs in different assemblies of the catalytic and one or more regulatory subunits. Probably part of a PP4 PPP4C-PPP4R2-PPP4R3 complex containing Pp4-19C, PPP4R2r and flfl. Interacts with mira. In terms of tissue distribution, expressed in neuroblasts.

The protein localises to the nucleus. It is found in the membrane. It localises to the cytoplasm. In terms of biological role, regulatory subunit of serine/threonine-protein phosphatase 4. The probable PP4 complex Pp4-19C-PPP4R2r-flfl (PPP4C-PPP4R2-PPP4R3) is required to prevent caspase induced cell death (in vitro). May be involved in DNA damage repair. Key mediator specific for the localization of mira and associated cell fate determinants during both interphase and mitosis. Nuclear Flfl is required to exclude mira/pros from the nucleus when inefficiently bound to the cytoskeleton/cortex, whereas cytosolic or membrane-associated flfl is required for the cortical association and asymmetric localization of mira/pros/brat/stau at metaphase and anaphase. The sequence is that of Serine/threonine-protein phosphatase 4 regulatory subunit 3 (flfl) from Drosophila melanogaster (Fruit fly).